We begin with the raw amino-acid sequence, 323 residues long: NADH-ubiquinone oxidoreductase chain 1 (323 aa).

8 helical membrane passes run 8-28, 74-94, 105-125, 145-165, 176-196, 236-256, 258-278, and 298-318; these read VINP…LTLL, FLFL…WAPM, LGVL…LGSG, ISYE…TGGF, SIWL…STLA, ILLM…IPAF, ELTA…FLWV, and FLPL…ALAG.

This sequence belongs to the complex I subunit 1 family.

The protein localises to the mitochondrion inner membrane. The enzyme catalyses a ubiquinone + NADH + 5 H(+)(in) = a ubiquinol + NAD(+) + 4 H(+)(out). Core subunit of the mitochondrial membrane respiratory chain NADH dehydrogenase (Complex I) that is believed to belong to the minimal assembly required for catalysis. Complex I functions in the transfer of electrons from NADH to the respiratory chain. The immediate electron acceptor for the enzyme is believed to be ubiquinone. The chain is NADH-ubiquinone oxidoreductase chain 1 (MT-ND1) from Oncorhynchus mykiss (Rainbow trout).